The sequence spans 108 residues: Protein FMC1 homolog (108 aa).

It belongs to the FMC1 family.

This Caenorhabditis elegans protein is Protein FMC1 homolog.